A 354-amino-acid chain; its full sequence is Probable butyrate kinase 2 (354 aa).

It belongs to the acetokinase family.

Its subcellular location is the cytoplasm. The enzyme catalyses butanoate + ATP = butanoyl phosphate + ADP. In Caldanaerobacter subterraneus subsp. tengcongensis (strain DSM 15242 / JCM 11007 / NBRC 100824 / MB4) (Thermoanaerobacter tengcongensis), this protein is Probable butyrate kinase 2.